The following is an 89-amino-acid chain: MRIEFEVTHPFHPWRGQRFVLSTRKQNWGEDRVMFYDADGRLRSLLASWTDVAAPDVFIQIAAGRSFVRPDDLATLAALIEQIERSHGG.

To Rhizobium NGR234A y4oN.

This is an uncharacterized protein from Sinorhizobium fredii (strain NBRC 101917 / NGR234).